A 354-amino-acid chain; its full sequence is Adenine deaminase (354 aa).

Residues histidine 20, histidine 22, and histidine 200 each contribute to the Zn(2+) site. Residue glutamate 203 is the Proton donor of the active site. Residue aspartate 281 participates in Zn(2+) binding. Aspartate 282 contributes to the substrate binding site.

Belongs to the metallo-dependent hydrolases superfamily. Adenosine and AMP deaminases family. Adenine deaminase type 2 subfamily. Requires Zn(2+) as cofactor.

The catalysed reaction is adenine + H2O + H(+) = hypoxanthine + NH4(+). Its function is as follows. Catalyzes the hydrolytic deamination of adenine to hypoxanthine. Plays an important role in the purine salvage pathway and in nitrogen catabolism. In Cupriavidus metallidurans (strain ATCC 43123 / DSM 2839 / NBRC 102507 / CH34) (Ralstonia metallidurans), this protein is Adenine deaminase.